A 545-amino-acid polypeptide reads, in one-letter code: MSNAMFCYQCQETVGNKGCTQVGVCGKKPETAALQDALIYVTKGLGQIATRLRAEGKAVDHRIDRLVTGNLFATITNANFDDDILAERVRMTCAAKKELAASLTDKSGLSDAALWEASEKSAMLAKAGTVGVMATTDDDVRSLRWLITFGLKGMAAYAKHADVLGKHENSLDAFMQEALAKTLDDSLSVADLVALTLETGKFGVSAMALLDAANTGTYGHPEITKVNIGVGSNPGILISGHDLRDLEMLLKQTEGTGVDVYTHSEMLPAHYYPAFKKYAHFKGNYGNAWWKQKEEFESFNGPVLLTTNCLVPPKDSYKDRVYTTGIVGFTGCKHIPGEIGEHKDFSAIIAHAKTCPAPTEIESGEIIGGFAHNQVLALADKVIDAVKSGAIKKFVVMAGCDGRAKSRSYYTDFAEGLPKDTVILTAGCAKYRYNKLNLGDIGGIPRVLDAGQCNDSYSLAVIALKLKEVFGLEDVNDLPIVYNIAWYEQKAVIVLLALLSLGVKNIHLGPTLPAFLSPNVAKVLVEQFNIGGITSPQDDLKAFFG.

[4Fe-4S] cluster-binding residues include Cys7, Cys10, Cys19, and Cys25. Positions 241, 265, 309, 400, 428, 453, 488, and 490 each coordinate hybrid [4Fe-2O-2S] cluster. Residue Cys400 is modified to Cysteine persulfide; in oxidized form.

The protein belongs to the HCP family. Monomer. [4Fe-4S] cluster serves as cofactor. Hybrid [4Fe-2O-2S] cluster is required as a cofactor.

It is found in the cytoplasm. It carries out the reaction A + NH4(+) + H2O = hydroxylamine + AH2 + H(+). Functionally, catalyzes the reduction of hydroxylamine to form NH(3) and H(2)O. In Desulfovibrio desulfuricans (strain ATCC 27774 / DSM 6949 / MB), this protein is Hydroxylamine reductase.